The chain runs to 376 residues: Deoxyuridine 5'-triphosphate nucleotidohydrolase (376 aa).

Belongs to the dUTPase family. The cofactor is Mg(2+).

The enzyme catalyses dUTP + H2O = dUMP + diphosphate + H(+). Involved in nucleotide metabolism: produces dUMP, the immediate precursor of thymidine nucleotides and decreases the intracellular concentration of dUTP to avoid uracil incorporation into viral DNA. This Human herpesvirus 6B (strain Z29) (HHV-6 variant B) protein is Deoxyuridine 5'-triphosphate nucleotidohydrolase.